The following is a 163-amino-acid chain: Putative ribose 5-phosphate isomerase (163 aa).

Position 16–17 (16–17 (DD)) interacts with D-ribulose 5-phosphate. The active-site Proton acceptor is cysteine 76. D-ribulose 5-phosphate-binding positions include 77–81 (GTGLG), asparagine 110, arginine 120, and lysine 148.

It belongs to the LacAB/RpiB family. Homodimer or homotetramer.

This is Putative ribose 5-phosphate isomerase from Coccidioides immitis (strain RS) (Valley fever fungus).